The primary structure comprises 404 residues: MEEILRLRRSVSIDDYIEKVKPIVEAVKREGDKAVIRFTRDLDGVELDSLRVTEDEFEKAYDAVDDGLIDALEVAKENIYRFHYVTSVERDMKVEFEDCVMGKIYTPIEKVGAYIPGGRASYPSTALMIGVPAKIAGVEKLVACTPPNKDGKVNPLTLVALDIAEFDEVYKAGGAQAIAAMAYGTETVEKVYKIVGPGNIYVTAAKLLVAKDVAIDMPAGPSEILVIADETANADFIACDCLAQLEHDPMAVAVVLTTSRKVADEVEKKVKSEGDFSNFAVFVVEDLAEAFEISNEFAPEHLTVAVKNPEEWLGKVRNAGSVFLGNFSPVAAGDYASGTNHVLPTAGYAKIYGGLSVESFLKHFTFQMLSEESMRRIGGDVVKIAEAEGLRWHAESVRKRLEKI.

Residues Tyr-114, Gln-176, and Asn-199 each contribute to the NAD(+) site. Substrate is bound by residues Ser-222, Gln-244, and His-247. Zn(2+)-binding residues include Gln-244 and His-247. Catalysis depends on proton acceptor residues Glu-300 and His-301. Substrate contacts are provided by His-301, Asp-334, Glu-388, and His-393. Residue Asp-334 coordinates Zn(2+). His-393 contacts Zn(2+).

This sequence belongs to the histidinol dehydrogenase family. It depends on Zn(2+) as a cofactor.

It carries out the reaction L-histidinol + 2 NAD(+) + H2O = L-histidine + 2 NADH + 3 H(+). It functions in the pathway amino-acid biosynthesis; L-histidine biosynthesis; L-histidine from 5-phospho-alpha-D-ribose 1-diphosphate: step 9/9. Functionally, catalyzes the sequential NAD-dependent oxidations of L-histidinol to L-histidinaldehyde and then to L-histidine. The polypeptide is Histidinol dehydrogenase (hisD) (Archaeoglobus fulgidus (strain ATCC 49558 / DSM 4304 / JCM 9628 / NBRC 100126 / VC-16)).